The primary structure comprises 296 residues: uncharacterized protein (296 aa).

The protein localises to the mitochondrion. This is an uncharacterized protein from Podospora anserina (strain S / ATCC MYA-4624 / DSM 980 / FGSC 10383) (Pleurage anserina).